We begin with the raw amino-acid sequence, 313 residues long: L-lactate dehydrogenase 1 (313 aa).

NAD(+) is bound by residues Val15, Asp36, Lys41, Tyr66, and 80–81 (GA). The substrate site is built by Gln83 and Arg89. Residues Ser102, 119 to 121 (VSN), and Ser144 each bind NAD(+). 121–124 (NPVD) provides a ligand contact to substrate. Residue 149–152 (DTSR) participates in substrate binding. Arg154 and His169 together coordinate beta-D-fructose 1,6-bisphosphate. His176 functions as the Proton acceptor in the catalytic mechanism. Tyr222 carries the post-translational modification Phosphotyrosine. Position 231 (Thr231) interacts with substrate.

The protein belongs to the LDH/MDH superfamily. LDH family. As to quaternary structure, homotetramer.

It is found in the cytoplasm. It carries out the reaction (S)-lactate + NAD(+) = pyruvate + NADH + H(+). It participates in fermentation; pyruvate fermentation to lactate; (S)-lactate from pyruvate: step 1/1. Allosterically activated by fructose 1,6-bisphosphate (FBP). Catalyzes the conversion of lactate to pyruvate. In Clostridium acetobutylicum (strain ATCC 824 / DSM 792 / JCM 1419 / IAM 19013 / LMG 5710 / NBRC 13948 / NRRL B-527 / VKM B-1787 / 2291 / W), this protein is L-lactate dehydrogenase 1.